The chain runs to 349 residues: Very-long-chain 3-oxoacyl-CoA reductase (349 aa).

The chain crosses the membrane as a helical span at residues 29–49 (AASLVFATGGLFLLSRGLSFL). 8 residues coordinate NADP(+): L74, D129, D137, N156, Y223, K227, V256, and S258. Residue Y223 is the Proton donor of the active site. K227 (lowers pKa of active site Tyr) is an active-site residue.

This sequence belongs to the short-chain dehydrogenases/reductases (SDR) family.

The protein localises to the endoplasmic reticulum membrane. It catalyses the reaction a very-long-chain (3R)-3-hydroxyacyl-CoA + NADP(+) = a very-long-chain 3-oxoacyl-CoA + NADPH + H(+). The protein operates within lipid metabolism; fatty acid biosynthesis. Functionally, component of the microsomal membrane bound fatty acid elongation system, which produces the 26-carbon very long-chain fatty acids (VLCFA) from palmitate. Catalyzes the reduction of the 3-ketoacyl-CoA intermediate that is formed in each cycle of fatty acid elongation. VLCFAs serve as precursors for ceramide and sphingolipids. The polypeptide is Very-long-chain 3-oxoacyl-CoA reductase (Coccidioides immitis (strain RS) (Valley fever fungus)).